The sequence spans 543 residues: Phosphatidylinositol/phosphatidylcholine transfer protein SFH12 (543 aa).

One can recognise a CRAL-TRIO domain in the interval Glu120–Asp294. The disordered stretch occupies residues His316–Glu356. Residues Asp490–Leu526 adopt a coiled-coil conformation.

This sequence belongs to the SFH family. As to expression, specifically expressed in flowers.

It localises to the golgi apparatus membrane. Its subcellular location is the cell membrane. Its function is as follows. Required for transport of secretory proteins from the Golgi complex. Catalyzes the transfer of phosphatidylinositol and phosphatidylcholine between membranes in vitro. In Arabidopsis thaliana (Mouse-ear cress), this protein is Phosphatidylinositol/phosphatidylcholine transfer protein SFH12 (SFH12).